A 136-amino-acid chain; its full sequence is Large ribosomal subunit protein uL16 (136 aa).

This sequence belongs to the universal ribosomal protein uL16 family. In terms of assembly, part of the 50S ribosomal subunit.

Its function is as follows. Binds 23S rRNA and is also seen to make contacts with the A and possibly P site tRNAs. This chain is Large ribosomal subunit protein uL16, found in Shewanella baltica (strain OS155 / ATCC BAA-1091).